Here is a 141-residue protein sequence, read N- to C-terminus: Putative nickel-responsive regulator (141 aa).

Ni(2+) contacts are provided by histidine 80, histidine 91, histidine 93, and cysteine 99.

It belongs to the transcriptional regulatory CopG/NikR family. Ni(2+) is required as a cofactor.

Its function is as follows. Transcriptional regulator. This is Putative nickel-responsive regulator from Methanococcus aeolicus (strain ATCC BAA-1280 / DSM 17508 / OCM 812 / Nankai-3).